Reading from the N-terminus, the 128-residue chain is Small ribosomal subunit protein uS11 (128 aa).

It belongs to the universal ribosomal protein uS11 family. In terms of assembly, part of the 30S ribosomal subunit. Interacts with proteins S7 and S18. Binds to IF-3.

Located on the platform of the 30S subunit, it bridges several disparate RNA helices of the 16S rRNA. Forms part of the Shine-Dalgarno cleft in the 70S ribosome. The sequence is that of Small ribosomal subunit protein uS11 from Wolbachia pipientis wMel.